The chain runs to 97 residues: RPHVHPPPEHQPPLEHPPPEYQPPHEKPPHVHPPPEYQPPYQKPPHEKSPYEPPPQEYQPPHEKPPQVKPPSEYQPPHEKPPHEHPPPEYQPPHEKP.

The segment at 1–97 is disordered; the sequence is RPHVHPPPEH…PEYQPPHEKP (97 aa). 2 stretches are compositionally biased toward pro residues: residues 9-22 and 31-43; these read EHQPPLEHPPPEYQ and VHPPPEYQPPYQK. The segment covering 76 to 97 has biased composition (basic and acidic residues); that stretch reads PPHEKPPHEHPPPEYQPPHEKP.

The protein belongs to the nodulin 75 family.

Involved in early stages of root nodule development. This is Early nodulin-75 (ENOD2) from Medicago sativa (Alfalfa).